The primary structure comprises 247 residues: Ubiquinone biosynthesis O-methyltransferase (247 aa).

S-adenosyl-L-methionine is bound by residues Arg-39, Gly-70, Asp-91, and Met-134.

Belongs to the methyltransferase superfamily. UbiG/COQ3 family.

The enzyme catalyses a 3-demethylubiquinol + S-adenosyl-L-methionine = a ubiquinol + S-adenosyl-L-homocysteine + H(+). It catalyses the reaction a 3-(all-trans-polyprenyl)benzene-1,2-diol + S-adenosyl-L-methionine = a 2-methoxy-6-(all-trans-polyprenyl)phenol + S-adenosyl-L-homocysteine + H(+). Its pathway is cofactor biosynthesis; ubiquinone biosynthesis. In terms of biological role, O-methyltransferase that catalyzes the 2 O-methylation steps in the ubiquinone biosynthetic pathway. The chain is Ubiquinone biosynthesis O-methyltransferase from Cereibacter sphaeroides (strain ATCC 17023 / DSM 158 / JCM 6121 / CCUG 31486 / LMG 2827 / NBRC 12203 / NCIMB 8253 / ATH 2.4.1.) (Rhodobacter sphaeroides).